The chain runs to 716 residues: Phosphoribosylformylglycinamidine synthase subunit PurL (716 aa).

The active site involves His-33. Tyr-36 lines the ATP pocket. Glu-77 contributes to the Mg(2+) binding site. Substrate contacts are provided by residues 78-81 and Arg-100; that span reads SHNH. His-79 (proton acceptor) is an active-site residue. Asp-101 contributes to the Mg(2+) binding site. Residue Gln-225 coordinates substrate. Mg(2+) is bound at residue Asp-253. Substrate is bound at residue 297–299; it reads ESQ. ATP-binding residues include Asn-475 and Gly-512. Residue Asn-513 participates in Mg(2+) binding. Residue Ser-515 participates in substrate binding.

The protein belongs to the FGAMS family. As to quaternary structure, monomer. Part of the FGAM synthase complex composed of 1 PurL, 1 PurQ and 2 PurS subunits.

Its subcellular location is the cytoplasm. It catalyses the reaction N(2)-formyl-N(1)-(5-phospho-beta-D-ribosyl)glycinamide + L-glutamine + ATP + H2O = 2-formamido-N(1)-(5-O-phospho-beta-D-ribosyl)acetamidine + L-glutamate + ADP + phosphate + H(+). Its pathway is purine metabolism; IMP biosynthesis via de novo pathway; 5-amino-1-(5-phospho-D-ribosyl)imidazole from N(2)-formyl-N(1)-(5-phospho-D-ribosyl)glycinamide: step 1/2. Its function is as follows. Part of the phosphoribosylformylglycinamidine synthase complex involved in the purines biosynthetic pathway. Catalyzes the ATP-dependent conversion of formylglycinamide ribonucleotide (FGAR) and glutamine to yield formylglycinamidine ribonucleotide (FGAM) and glutamate. The FGAM synthase complex is composed of three subunits. PurQ produces an ammonia molecule by converting glutamine to glutamate. PurL transfers the ammonia molecule to FGAR to form FGAM in an ATP-dependent manner. PurS interacts with PurQ and PurL and is thought to assist in the transfer of the ammonia molecule from PurQ to PurL. The polypeptide is Phosphoribosylformylglycinamidine synthase subunit PurL (Methanosarcina mazei (strain ATCC BAA-159 / DSM 3647 / Goe1 / Go1 / JCM 11833 / OCM 88) (Methanosarcina frisia)).